We begin with the raw amino-acid sequence, 81 residues long: Styelin-E (81 aa).

An N-terminal signal peptide occupies residues 1 to 22 (MQMKATILIVLVALFMIQQSEA). 6'-bromotryptophan is present on tryptophan 24. Arginine 26 is subject to 3,4-dihydroxyarginine. 4,5-dihydroxylysine occurs at positions 27, 30, and 34. 2 positions are modified to 3',4'-dihydroxyphenylalanine: tyrosine 36 and tyrosine 37. A 4,5-dihydroxylysine modification is found at lysine 38. Residue lysine 40 is modified to 5-hydroxylysine. 3',4'-dihydroxyphenylalanine is present on residues tyrosine 41 and tyrosine 42. Lysine 44 bears the 5-hydroxylysine mark. Leucine 54 is modified (leucine amide). A propeptide spans 56–81 (DMTDEEFQDFMKEVEQAREEELQSRQ) (removed in mature form).

Post-translationally, contains L-DOPA (3',4'-dihydroxyphenylalanine). In terms of tissue distribution, hemocytes and pharyngeal tissues.

Its subcellular location is the secreted. Its function is as follows. Bactericidal against several Gram-positive and Gram-negative bacteria. The polypeptide is Styelin-E (Styela clava (Sea squirt)).